Consider the following 347-residue polypeptide: Molybdenum cofactor biosynthesis bifunctional protein (347 aa).

The interval 1–158 (MFTHLDENQQ…EKTGGKADVS (158 aa)) is molybdenum cofactor biosynthesis protein C. Substrate-binding positions include 75–77 (FCH) and 116–117 (ME). The active-site For MoaC activity is aspartate 131. A molybdenum cofactor guanylyltransferase region spans residues 159 to 347 (QTPLYGLVLT…NSPEDYGQIN (189 aa)). GTP is bound by residues 167–169 (LTG), lysine 179, aspartate 226, and aspartate 255. Position 255 (aspartate 255) interacts with Mg(2+).

In the N-terminal section; belongs to the MoaC family. This sequence in the C-terminal section; belongs to the MobA family. The cofactor is Mg(2+).

The protein localises to the cytoplasm. The enzyme catalyses Mo-molybdopterin + GTP + H(+) = Mo-molybdopterin guanine dinucleotide + diphosphate. It catalyses the reaction (8S)-3',8-cyclo-7,8-dihydroguanosine 5'-triphosphate = cyclic pyranopterin phosphate + diphosphate. The protein operates within cofactor biosynthesis; molybdopterin biosynthesis. Catalyzes the conversion of (8S)-3',8-cyclo-7,8-dihydroguanosine 5'-triphosphate to cyclic pyranopterin monophosphate (cPMP). In terms of biological role, transfers a GMP moiety from GTP to Mo-molybdopterin (Mo-MPT) cofactor (Moco or molybdenum cofactor) to form Mo-molybdopterin guanine dinucleotide (Mo-MGD) cofactor. The protein is Molybdenum cofactor biosynthesis bifunctional protein (moaC/mobA) of Synechocystis sp. (strain ATCC 27184 / PCC 6803 / Kazusa).